The sequence spans 467 residues: UDP-N-acetylmuramate--L-alanine ligase (467 aa).

123-129 (GTHGKST) lines the ATP pocket.

This sequence belongs to the MurCDEF family.

It is found in the cytoplasm. It carries out the reaction UDP-N-acetyl-alpha-D-muramate + L-alanine + ATP = UDP-N-acetyl-alpha-D-muramoyl-L-alanine + ADP + phosphate + H(+). It participates in cell wall biogenesis; peptidoglycan biosynthesis. Functionally, cell wall formation. This is UDP-N-acetylmuramate--L-alanine ligase from Arthrobacter sp. (strain FB24).